Consider the following 302-residue polypeptide: Probable alpha-L-glutamate ligase (302 aa).

Residues 112 to 294 (LQLLLKAGIP…IAAEIIDYIE (183 aa)) form the ATP-grasp domain. ATP is bound by residues lysine 148, 185–186 (DF), aspartate 194, and 218–220 (RAN). 3 residues coordinate Mg(2+): aspartate 255, glutamate 267, and asparagine 269. Mn(2+) contacts are provided by aspartate 255, glutamate 267, and asparagine 269.

This sequence belongs to the RimK family. Requires Mg(2+) as cofactor. It depends on Mn(2+) as a cofactor.

In Haemophilus influenzae (strain ATCC 51907 / DSM 11121 / KW20 / Rd), this protein is Probable alpha-L-glutamate ligase.